Here is a 432-residue protein sequence, read N- to C-terminus: Adenylosuccinate synthetase (432 aa).

Residues 13–19 and 41–43 each bind GTP; these read GDEGKGK and GHT. Asp14 (proton acceptor) is an active-site residue. Residues Asp14 and Gly41 each contribute to the Mg(2+) site. IMP-binding positions include 14–17, 39–42, Thr130, Arg144, Gln225, Thr240, and Arg304; these read DEGK and NAGH. Residue His42 is the Proton donor of the active site. Substrate is bound at residue 300 to 306; the sequence is ATTGRRR. GTP is bound by residues Arg306, 332–334, and 415–417; these read KLD and STG.

Belongs to the adenylosuccinate synthetase family. As to quaternary structure, homodimer. Mg(2+) serves as cofactor.

The protein resides in the cytoplasm. It catalyses the reaction IMP + L-aspartate + GTP = N(6)-(1,2-dicarboxyethyl)-AMP + GDP + phosphate + 2 H(+). The protein operates within purine metabolism; AMP biosynthesis via de novo pathway; AMP from IMP: step 1/2. In terms of biological role, plays an important role in the de novo pathway of purine nucleotide biosynthesis. Catalyzes the first committed step in the biosynthesis of AMP from IMP. The polypeptide is Adenylosuccinate synthetase (Salmonella typhi).